The following is a 100-amino-acid chain: Urease subunit gamma (100 aa).

The protein belongs to the urease gamma subunit family. As to quaternary structure, heterotrimer of UreA (gamma), UreB (beta) and UreC (alpha) subunits. Three heterotrimers associate to form the active enzyme.

It is found in the cytoplasm. It carries out the reaction urea + 2 H2O + H(+) = hydrogencarbonate + 2 NH4(+). It functions in the pathway nitrogen metabolism; urea degradation; CO(2) and NH(3) from urea (urease route): step 1/1. This Acinetobacter baumannii (strain AB307-0294) protein is Urease subunit gamma.